We begin with the raw amino-acid sequence, 206 residues long: dITP/XTP pyrophosphatase (206 aa).

7–12 (SCHGYK) serves as a coordination point for substrate. D70 acts as the Proton acceptor in catalysis. Residue D70 coordinates Mg(2+). Residues T71, 154 to 157 (FGYD), K177, and 182 to 183 (HR) each bind substrate.

It belongs to the HAM1 NTPase family. Homodimer. Requires Mg(2+) as cofactor.

It catalyses the reaction XTP + H2O = XMP + diphosphate + H(+). The enzyme catalyses dITP + H2O = dIMP + diphosphate + H(+). It carries out the reaction ITP + H2O = IMP + diphosphate + H(+). In terms of biological role, pyrophosphatase that catalyzes the hydrolysis of nucleoside triphosphates to their monophosphate derivatives, with a high preference for the non-canonical purine nucleotides XTP (xanthosine triphosphate), dITP (deoxyinosine triphosphate) and ITP. Seems to function as a house-cleaning enzyme that removes non-canonical purine nucleotides from the nucleotide pool, thus preventing their incorporation into DNA/RNA and avoiding chromosomal lesions. The protein is dITP/XTP pyrophosphatase of Chlamydia caviae (strain ATCC VR-813 / DSM 19441 / 03DC25 / GPIC) (Chlamydophila caviae).